Here is a 214-residue protein sequence, read N- to C-terminus: Germin-like protein (214 aa).

The N-terminal stretch at 1-22 (MVMMRIFFFLFLLAFPVFTANA) is a signal peptide. A disulfide bond links Cys-28 and Cys-44. Positions 58-204 (SGLAKPGNTT…TTCLDEATIK (147 aa)) constitute a Cupin type-1 domain. 3 residues coordinate Mn(2+): His-106, His-108, and Glu-113.

This sequence belongs to the germin family. In terms of assembly, oligomer (believed to be a pentamer but probably hexamer). As to expression, cotyledons and leaves.

It localises to the secreted. The protein localises to the extracellular space. It is found in the apoplast. The sequence is that of Germin-like protein (GLP) from Ipomoea nil (Japanese morning glory).